A 303-amino-acid polypeptide reads, in one-letter code: MHGILPLWKPKGLTSHDCVMRCRRYFKTKKVGHTGTLDPEVEGVLPICIGQATKIVPFLTDTKKVYEATVQLGYSTETEDATGKIVETKEVSDFPTNKNLEEVLQTFIGRTKQIPPMYSAVKVNGKKLYEYARANESVERPVREIEIFELTLTSVDEKNHSFDIRIVCSKGTYIRTLCVDIGKALGYPAHMSLLTRTKTGAFSEKNTVTFDMIEEAVSNQSEERLLEPIINGLQHLEQIEVNEDMEKRILNGQKLSLQRNQPKQTDPFVFVREGNVLAIYQSHPTNEDQIKPVRVFAIEDKKV.

The Nucleophile role is filled by Asp38.

Belongs to the pseudouridine synthase TruB family. Type 1 subfamily.

The catalysed reaction is uridine(55) in tRNA = pseudouridine(55) in tRNA. Functionally, responsible for synthesis of pseudouridine from uracil-55 in the psi GC loop of transfer RNAs. This is tRNA pseudouridine synthase B from Oceanobacillus iheyensis (strain DSM 14371 / CIP 107618 / JCM 11309 / KCTC 3954 / HTE831).